The following is a 261-amino-acid chain: 6-carboxyhexanoate--CoA ligase (261 aa).

The protein belongs to the BioW family. Homodimer. It depends on Mg(2+) as a cofactor.

The catalysed reaction is heptanedioate + ATP + CoA = 6-carboxyhexanoyl-CoA + AMP + diphosphate. It functions in the pathway metabolic intermediate metabolism; pimeloyl-CoA biosynthesis; pimeloyl-CoA from pimelate: step 1/1. Its function is as follows. Catalyzes the transformation of pimelate into pimeloyl-CoA with concomitant hydrolysis of ATP to AMP. The protein is 6-carboxyhexanoate--CoA ligase of Bacillus licheniformis (strain ATCC 14580 / DSM 13 / JCM 2505 / CCUG 7422 / NBRC 12200 / NCIMB 9375 / NCTC 10341 / NRRL NRS-1264 / Gibson 46).